The chain runs to 232 residues: Ashwin (232 aa).

5 positions are modified to phosphoserine: Ser-112, Ser-182, Ser-184, Ser-189, and Ser-193. The segment at 163-232 is disordered; it reads KMEHNNNDTQ…KRKIQHVTWP (70 aa). 2 positions are modified to phosphothreonine: Thr-197 and Thr-198. Residues 206–224 are compositionally biased toward basic and acidic residues; sequence APKEEAEATNHLKPPEVKR.

Belongs to the ashwin family. As to quaternary structure, component of the tRNA-splicing ligase complex.

The protein localises to the nucleus. The polypeptide is Ashwin (Mus musculus (Mouse)).